A 176-amino-acid polypeptide reads, in one-letter code: Sigma intracellular receptor 2 (176 aa).

Residues 1–9 are Cytoplasmic-facing; the sequence is MGALAARRC. The chain crosses the membrane as a helical span at residues 10-30; the sequence is VEWLLGLYFVSHIPITLFIDL. Residues 10-158 form the EXPERA domain; sequence VEWLLGLYFV…PYLIIPLILL (149 aa). At 31 to 68 the chain is on the lumenal side; the sequence is QAVLPPELYPQEFSNLLRWYSKEFKDPLMQEPPVWFKS. A helical transmembrane segment spans residues 69–89; that stretch reads FLLCELVFQLPFFPIAAYAFF. Cholesterol-binding residues include Val-75 and Gln-77. The Cytoplasmic portion of the chain corresponds to 90 to 99; the sequence is KGSCRWIRIP. Residues 100-120 traverse the membrane as a helical segment; that stretch reads AIIYAAHTITTLIPILYTLLF. At 121–140 the chain is on the lumenal side; sequence EDFSKAVAFKGQRPESFRER. A helical membrane pass occupies residues 141-161; sequence LTLVGVYAPYLIIPLILLLFM. Topologically, residues 162 to 176 are cytoplasmic; that stretch reads LRNPYYKYEEKRKKK. An ER retention motif motif is present at residues 172–176; sequence KRKKK.

Belongs to the TMEM97/sigma-2 receptor family. As to quaternary structure, homodimer. Interacts with NPC1; the interaction impairs NPC1-mediated cholesterol transport. Interacts with PGRMC1 and LDLR; the interaction increases LDL internalization. Interacts with histatin 1/HTN1; the interaction induces HTN1-stimulating wound healing. Interacts with TSPO.

It localises to the rough endoplasmic reticulum membrane. The protein resides in the nucleus membrane. Its function is as follows. Sigma-2 receptor which contributes to ameliorate dysfunctional cellular processes and slow degenerative progression by regulating cell functions including cholesterol biosynthesis/trafficking, membrane trafficking, autophagy, lipid membrane-bound protein trafficking, and receptor stabilization at the cell surface. Forms a ternary complex with PGRMC1 receptor and low density lipoprotein receptor/LDLR at the plasma membrane, which increases LDLR-mediated LDL cholesterol internalization. Decreases lysosomal sterol transporter NPC1 availability to the cell, probably through NPC1-binding, hence controlling lipid transport, including cholesterol and LBPA, outside of late endosome/lysosome. Binds regio- and stereoselective ligand 20(S)-hydroxycholesterol (20(S)-OHC) which enhances TMEM97-NPC1 interaction and decreases TMEM97-PGRMC1 and TMEM97-TSPO interactions, thereby linking OHC binding to cholesterol homeostasis. Also able to bind cholesterol. Binds histatin 1 (Hst 1)/HN1 salivary peptide at the ER membrane, which is critical for increasing mitochondria-ER contacts and stimulating Hst1 wound healing properties. May alter the activity of some cytochrome P450 proteins. Although shows homologies with sterol isomerases (EXPERA domain), not able to catalyze sterol isomerization. However, may act as sensors of these molecules. Acts as a quality control factor in the ER, promoting the proteolytic degradation of nonproductive and extramitochondrial precursor proteins in the ER membrane thus removing them from the ER surface. The protein is Sigma intracellular receptor 2 of Mus musculus (Mouse).